The chain runs to 351 residues: Phosphate acyltransferase (351 aa).

This sequence belongs to the PlsX family. As to quaternary structure, homodimer. Probably interacts with PlsY.

The protein localises to the cytoplasm. The catalysed reaction is a fatty acyl-[ACP] + phosphate = an acyl phosphate + holo-[ACP]. The protein operates within lipid metabolism; phospholipid metabolism. In terms of biological role, catalyzes the reversible formation of acyl-phosphate (acyl-PO(4)) from acyl-[acyl-carrier-protein] (acyl-ACP). This enzyme utilizes acyl-ACP as fatty acyl donor, but not acyl-CoA. In Neisseria meningitidis serogroup C / serotype 2a (strain ATCC 700532 / DSM 15464 / FAM18), this protein is Phosphate acyltransferase.